The primary structure comprises 794 residues: Ribonucleoside-diphosphate reductase large subunit (794 aa).

One can recognise an ATP-cone domain in the interval 1–92; sequence MHVIKRDGGQ…VSNLHKETKK (92 aa). ATP contacts are provided by residues 5 to 6, 11 to 17, Thr-53, and Asp-57; these read KR and EGVMFDK. GDP-binding residues include Ser-202 and Ser-217. A disulfide bond links Cys-218 and Cys-444. Residues 226 to 228, Lys-243, Arg-256, and 263 to 264 each bind dTTP; these read DSI and AG. Asn-427 is a binding site for GDP. Residue Asn-427 is the Proton acceptor of the active site. The Cysteine radical intermediate role is filled by Cys-429. GDP is bound by residues Glu-431 and 604 to 607; that span reads TAST. Glu-431 serves as the catalytic Proton acceptor.

Belongs to the ribonucleoside diphosphate reductase large chain family. Heterodimer of a large and a small subunit.

Its subcellular location is the cytoplasm. It catalyses the reaction a 2'-deoxyribonucleoside 5'-diphosphate + [thioredoxin]-disulfide + H2O = a ribonucleoside 5'-diphosphate + [thioredoxin]-dithiol. Its activity is regulated as follows. Under complex allosteric control mediated by deoxynucleoside triphosphates and ATP binding to separate specificity and activation sites on the M1 subunit. The type of nucleotide bound at the specificity site determines substrate preference. It seems probable that ATP makes the enzyme reduce CDP and UDP, dGTP favors ADP reduction and dTTP favors GDP reduction. Stimulated by ATP and inhibited by dATP binding to the activity site. Its function is as follows. Provides the precursors necessary for DNA synthesis. Catalyzes the biosynthesis of deoxyribonucleotides from the corresponding ribonucleotides. The sequence is that of Ribonucleoside-diphosphate reductase large subunit (rrm1) from Danio rerio (Zebrafish).